Reading from the N-terminus, the 71-residue chain is Small ribosomal subunit protein bS18c (71 aa).

Belongs to the bacterial ribosomal protein bS18 family. In terms of assembly, part of the 30S ribosomal subunit.

Its subcellular location is the plastid. The protein localises to the cyanelle. This Cyanophora paradoxa protein is Small ribosomal subunit protein bS18c (rps18).